Here is a 156-residue protein sequence, read N- to C-terminus: NAD(P)H-quinone oxidoreductase subunit N (156 aa).

Belongs to the complex I NdhN subunit family. In terms of assembly, NDH-1 can be composed of about 15 different subunits; different subcomplexes with different compositions have been identified which probably have different functions.

It is found in the cellular thylakoid membrane. It catalyses the reaction a plastoquinone + NADH + (n+1) H(+)(in) = a plastoquinol + NAD(+) + n H(+)(out). The catalysed reaction is a plastoquinone + NADPH + (n+1) H(+)(in) = a plastoquinol + NADP(+) + n H(+)(out). NDH-1 shuttles electrons from an unknown electron donor, via FMN and iron-sulfur (Fe-S) centers, to quinones in the respiratory and/or the photosynthetic chain. The immediate electron acceptor for the enzyme in this species is believed to be plastoquinone. Couples the redox reaction to proton translocation, and thus conserves the redox energy in a proton gradient. Cyanobacterial NDH-1 also plays a role in inorganic carbon-concentration. The sequence is that of NAD(P)H-quinone oxidoreductase subunit N from Prochlorococcus marinus subsp. pastoris (strain CCMP1986 / NIES-2087 / MED4).